The following is a 134-amino-acid chain: Large ribosomal subunit protein eL14 (134 aa).

It belongs to the eukaryotic ribosomal protein eL14 family. Component of the large ribosomal subunit (LSU). Mature yeast ribosomes consist of a small (40S) and a large (60S) subunit. The 40S small subunit contains 1 molecule of ribosomal RNA (18S rRNA) and at least 33 different proteins. The large 60S subunit contains 3 rRNA molecules (25S, 5.8S and 5S rRNA) and at least 46 different proteins.

Its subcellular location is the cytoplasm. The protein localises to the nucleus. Its function is as follows. Component of the ribosome, a large ribonucleoprotein complex responsible for the synthesis of proteins in the cell. The small ribosomal subunit (SSU) binds messenger RNAs (mRNAs) and translates the encoded message by selecting cognate aminoacyl-transfer RNA (tRNA) molecules. The large subunit (LSU) contains the ribosomal catalytic site termed the peptidyl transferase center (PTC), which catalyzes the formation of peptide bonds, thereby polymerizing the amino acids delivered by tRNAs into a polypeptide chain. The nascent polypeptides leave the ribosome through a tunnel in the LSU and interact with protein factors that function in enzymatic processing, targeting, and the membrane insertion of nascent chains at the exit of the ribosomal tunnel. This is Large ribosomal subunit protein eL14 (rpl14) from Schizosaccharomyces pombe (strain 972 / ATCC 24843) (Fission yeast).